We begin with the raw amino-acid sequence, 799 residues long: Oxygen sensor protein DosP (799 aa).

The 72-residue stretch at 10–81 folds into the PAS 1 domain; it reads ADGIFFPALE…YIRHNREGGK (72 aa). Residues H69 and M87 each coordinate heme. The region spanning 134-207 is the PAS 2 domain; sequence QTRQLIIAVD…LQQLLWKTAR (74 aa). In terms of domain architecture, PAC spans 208-260; the sequence is DQDEFLLLTRTGEKIWIKASISPVYDVLAHLQNLVMTFSDITEERQIRQLEGN. The 131-residue stretch at 402–532 folds into the GGDEF domain; that stretch reads VSPVVYLIGV…GGNGWQFFSP (131 aa). In terms of domain architecture, EAL spans 541 to 795; it reads RLVLGAALKE…EIPGWMSSVL (255 aa).

As to quaternary structure, homodimer; has been previously suggested to be a homotetramer based on size exclusion chromatography. Forms a complex with DosC. Requires heme as cofactor. Mg(2+) is required as a cofactor. Post-translationally, the heme distal ligand is coordinated by Met-87 in the active Fe(2+) (ferrous) form, by O(2) in the O(2)-bound form and by H(2)O in the inactive Fe(3+) (ferric) form.

It carries out the reaction 3',3'-c-di-GMP + H2O = 5'-phosphoguanylyl(3'-&gt;5')guanosine + H(+). Its activity is regulated as follows. Has c-di-GMP PDE activity in both Fe(2+) and Fe(3+)-bound forms; this activity is increased 6-7 fold by binding of O(2) and CO and NO. Has cAMP PDE activity only when the heme is in the Fe(2+) form. cAMP PDE activity is inhibited by oxidation of the heme iron and by binding of external ligands such as CO and NO. Also strongly inhibited by etazolate hydrochloride, a selective cAMP PDE inhibitor. PDE activity is inhibited in the absence of oxygen. Heme-based oxygen sensor protein displaying phosphodiesterase (PDE) activity toward c-di-GMP in response to oxygen availability. Involved in the modulation of intracellular c-di-GMP levels, in association with DosC which catalyzes the biosynthesis of c-di-GMP (diguanylate cyclase activity). Cyclic-di-GMP is a second messenger which controls cell surface-associated traits in bacteria. Has very poor PDE activity on cAMP but is not active with cGMP, bis(p-nitrophenyl) phosphate or p-nitrophenyl phosphate. Via its PDE activity on c-di-GMP, DosP regulates biofilm formation through the repression of transcription of the csgBAC operon, which encodes curli structural subunits. In Escherichia coli (strain K12), this protein is Oxygen sensor protein DosP (dosP).